Reading from the N-terminus, the 290-residue chain is 33 kDa chaperonin (290 aa).

2 disulfides stabilise this stretch: cysteine 235-cysteine 237 and cysteine 268-cysteine 271.

The protein belongs to the HSP33 family. In terms of processing, under oxidizing conditions two disulfide bonds are formed involving the reactive cysteines. Under reducing conditions zinc is bound to the reactive cysteines and the protein is inactive.

It is found in the cytoplasm. Its function is as follows. Redox regulated molecular chaperone. Protects both thermally unfolding and oxidatively damaged proteins from irreversible aggregation. Plays an important role in the bacterial defense system toward oxidative stress. The polypeptide is 33 kDa chaperonin (Streptococcus mutans serotype c (strain ATCC 700610 / UA159)).